Reading from the N-terminus, the 122-residue chain is UPF0382 membrane protein SH2409 (122 aa).

A run of 4 helical transmembrane segments spans residues Leu3–Ala23, Met46–Val66, Ala69–Leu89, and Ile98–Phe118.

This sequence belongs to the UPF0382 family.

Its subcellular location is the cell membrane. This Staphylococcus haemolyticus (strain JCSC1435) protein is UPF0382 membrane protein SH2409.